The chain runs to 434 residues: Methylenetetrahydrofolate--tRNA-(uracil-5-)-methyltransferase TrmFO (434 aa).

9 to 14 (GAGLAG) is a binding site for FAD.

Belongs to the MnmG family. TrmFO subfamily. FAD serves as cofactor.

The protein localises to the cytoplasm. The enzyme catalyses uridine(54) in tRNA + (6R)-5,10-methylene-5,6,7,8-tetrahydrofolate + NADH + H(+) = 5-methyluridine(54) in tRNA + (6S)-5,6,7,8-tetrahydrofolate + NAD(+). The catalysed reaction is uridine(54) in tRNA + (6R)-5,10-methylene-5,6,7,8-tetrahydrofolate + NADPH + H(+) = 5-methyluridine(54) in tRNA + (6S)-5,6,7,8-tetrahydrofolate + NADP(+). Its function is as follows. Catalyzes the folate-dependent formation of 5-methyl-uridine at position 54 (M-5-U54) in all tRNAs. The sequence is that of Methylenetetrahydrofolate--tRNA-(uracil-5-)-methyltransferase TrmFO from Listeria monocytogenes serotype 4b (strain F2365).